A 325-amino-acid polypeptide reads, in one-letter code: MVPREAPESAQCLCPSLTIPNAKDVLRKRHKRRSRQHQRFMARKALLQEQGLLSMPPEPGSSPLPTPFGAVTATEDASSGKQCPRAGSGGAPCSRRPAPGKASGPLPSKCVAIDCEMVGTGPRGRVSELARCSIVSYHGDVLYDKYIRPEMPIVDYRTRWSGITRQHMCKAIPFQVAQKEILKLLKGKVVVGHALHNDFQALKYVHPRSQTRDTTYVPNFLSEPSLHIRARVSLKDLALQLLHKKIQVGQHGHSSVEDATTAMELYRLVEVQWEQQEARSLWTCPEDREPDSSTDMEQYMEDQYWPDDLAHGSRGGAREAQDRRN.

The Nucleolar localization signal signature appears at 27–35 (RKRHKRRSR). The segment at 53–105 (LSMPPEPGSSPLPTPFGAVTATEDASSGKQCPRAGSGGAPCSRRPAPGKASGP) is disordered. Over residues 56–66 (PPEPGSSPLPT) the composition is skewed to pro residues. The Exonuclease domain occupies 110 to 266 (CVAIDCEMVG…EDATTAMELY (157 aa)). The Nuclear localization signal motif lies at 165 to 188 (RQHMCKAIPFQVAQKEILKLLKGK). The disordered stretch occupies residues 281–325 (LWTCPEDREPDSSTDMEQYMEDQYWPDDLAHGSRGGAREAQDRRN). Residues 308–325 (DLAHGSRGGAREAQDRRN) are compositionally biased toward basic and acidic residues.

It localises to the nucleus. The protein localises to the nucleolus. Its function is as follows. Exonuclease with activity against single- and double-stranded DNA and RNA. Mediates p53-induced apoptosis. When induced by p53 following DNA damage, digests double-stranded DNA to form single-stranded DNA and amplifies DNA damage signals, leading to enhancement of apoptosis. This Pongo abelii (Sumatran orangutan) protein is Apoptosis-enhancing nuclease (AEN).